Here is a 240-residue protein sequence, read N- to C-terminus: Ribosomal RNA large subunit methyltransferase E (240 aa).

The span at 1-20 (MSKAGGNKGGSRTGGRGGAG) shows a compositional bias: gly residues. Positions 1–40 (MSKAGGNKGGSRTGGRGGAGSSNLHVRVKKKAGTTKESSR) are disordered. S-adenosyl-L-methionine contacts are provided by Gly92, Trp94, Asp115, Asp131, and Asp155. The Proton acceptor role is filled by Lys195.

It belongs to the class I-like SAM-binding methyltransferase superfamily. RNA methyltransferase RlmE family.

It localises to the cytoplasm. The enzyme catalyses uridine(2552) in 23S rRNA + S-adenosyl-L-methionine = 2'-O-methyluridine(2552) in 23S rRNA + S-adenosyl-L-homocysteine + H(+). Its function is as follows. Specifically methylates the uridine in position 2552 of 23S rRNA at the 2'-O position of the ribose in the fully assembled 50S ribosomal subunit. The chain is Ribosomal RNA large subunit methyltransferase E from Brucella ovis (strain ATCC 25840 / 63/290 / NCTC 10512).